Reading from the N-terminus, the 503-residue chain is WD repeat-containing protein 55 homolog (503 aa).

Residues 1 to 131 are disordered; sequence MHTHNNFKTP…DSAAFDLDDL (131 aa). Acidic residues-rich tracts occupy residues 12–23 and 37–56; these read DADELDDLDDDM and VGED…DMEA. A compositionally biased stretch (polar residues) spans 59–76; that stretch reads PNQNADENESISSDSSFD. A compositionally biased stretch (acidic residues) spans 78–96; that stretch reads NAEDSSDSDDSMLEEDEAE. 6 WD repeats span residues 157–196, 201–242, 244–282, 285–324, 327–366, and 411–450; these read KLED…NKLL, VHSK…KLYE, AHDD…PIFE, EVED…LYVQ, PYEE…YHCD, and QHNM…DFGD. The tract at residues 483 to 503 is disordered; sequence TKEDEDNADNNDAAAGPSNSA.

It belongs to the WD repeat WDR55 family.

The polypeptide is WD repeat-containing protein 55 homolog (Drosophila pseudoobscura pseudoobscura (Fruit fly)).